Here is a 275-residue protein sequence, read N- to C-terminus: Diaminopimelate epimerase (275 aa).

Substrate is bound by residues Asn12, Gln45, and Asn65. Cys74 acts as the Proton donor in catalysis. Substrate is bound by residues 75 to 76, Asn158, Asn191, and 209 to 210; these read GN and ER. Cys218 serves as the catalytic Proton acceptor. Residue 219-220 participates in substrate binding; the sequence is GT.

The protein belongs to the diaminopimelate epimerase family. In terms of assembly, homodimer.

The protein localises to the cytoplasm. It carries out the reaction (2S,6S)-2,6-diaminopimelate = meso-2,6-diaminopimelate. It functions in the pathway amino-acid biosynthesis; L-lysine biosynthesis via DAP pathway; DL-2,6-diaminopimelate from LL-2,6-diaminopimelate: step 1/1. Its function is as follows. Catalyzes the stereoinversion of LL-2,6-diaminopimelate (L,L-DAP) to meso-diaminopimelate (meso-DAP), a precursor of L-lysine and an essential component of the bacterial peptidoglycan. The polypeptide is Diaminopimelate epimerase (Shewanella denitrificans (strain OS217 / ATCC BAA-1090 / DSM 15013)).